Consider the following 157-residue polypeptide: Large ribosomal subunit protein uL15 (157 aa).

The segment at Met-1–Arg-41 is disordered. Over residues Arg-21–Ile-35 the composition is skewed to gly residues.

Belongs to the universal ribosomal protein uL15 family. In terms of assembly, part of the 50S ribosomal subunit.

Functionally, binds to the 23S rRNA. This chain is Large ribosomal subunit protein uL15, found in Jannaschia sp. (strain CCS1).